A 507-amino-acid chain; its full sequence is ATP synthase subunit alpha, chloroplastic (507 aa).

170–177 (GDRQTGKT) is an ATP binding site.

Belongs to the ATPase alpha/beta chains family. As to quaternary structure, F-type ATPases have 2 components, CF(1) - the catalytic core - and CF(0) - the membrane proton channel. CF(1) has five subunits: alpha(3), beta(3), gamma(1), delta(1), epsilon(1). CF(0) has four main subunits: a, b, b' and c.

It is found in the plastid. It localises to the chloroplast thylakoid membrane. It carries out the reaction ATP + H2O + 4 H(+)(in) = ADP + phosphate + 5 H(+)(out). Produces ATP from ADP in the presence of a proton gradient across the membrane. The alpha chain is a regulatory subunit. The chain is ATP synthase subunit alpha, chloroplastic from Citrus sinensis (Sweet orange).